Consider the following 479-residue polypeptide: Sulfate adenylyltransferase subunit 1 (479 aa).

The tr-type G domain occupies 25–239; sequence KSLLRFLTCG…EVLETVDIQR (215 aa). The tract at residues 34-41 is G1; the sequence is GSVDDGKS. 34-41 contributes to the GTP binding site; the sequence is GSVDDGKS. Residues 92–96 are G2; it reads GITID. Positions 113 to 116 are G3; that stretch reads DTPG. GTP-binding positions include 113–117 and 168–171; these read DTPGH and NKMD. The tract at residues 168–171 is G4; it reads NKMD. The G5 stretch occupies residues 206–208; that stretch reads SAL.

It belongs to the TRAFAC class translation factor GTPase superfamily. Classic translation factor GTPase family. CysN/NodQ subfamily. Heterodimer composed of CysD, the smaller subunit, and CysN.

The enzyme catalyses sulfate + ATP + H(+) = adenosine 5'-phosphosulfate + diphosphate. The protein operates within sulfur metabolism; hydrogen sulfide biosynthesis; sulfite from sulfate: step 1/3. Its function is as follows. With CysD forms the ATP sulfurylase (ATPS) that catalyzes the adenylation of sulfate producing adenosine 5'-phosphosulfate (APS) and diphosphate, the first enzymatic step in sulfur assimilation pathway. APS synthesis involves the formation of a high-energy phosphoric-sulfuric acid anhydride bond driven by GTP hydrolysis by CysN coupled to ATP hydrolysis by CysD. This chain is Sulfate adenylyltransferase subunit 1, found in Salmonella gallinarum (strain 287/91 / NCTC 13346).